The following is a 662-amino-acid chain: Acetyl-coenzyme A synthetase (662 aa).

CoA contacts are provided by residues 197-200 (RKGK) and T317. ATP is bound by residues 393-395 (GEP), 417-422 (DTWWQT), D510, and R525. Residue S533 coordinates CoA. ATP is bound at residue R536. Residues H549 and V552 each coordinate Mg(2+). Position 623 is an N6-acetyllysine (K623).

Belongs to the ATP-dependent AMP-binding enzyme family. It depends on Mg(2+) as a cofactor. Post-translationally, acetylated. Deacetylation by the SIR2-homolog deacetylase activates the enzyme.

It carries out the reaction acetate + ATP + CoA = acetyl-CoA + AMP + diphosphate. In terms of biological role, catalyzes the conversion of acetate into acetyl-CoA (AcCoA), an essential intermediate at the junction of anabolic and catabolic pathways. AcsA undergoes a two-step reaction. In the first half reaction, AcsA combines acetate with ATP to form acetyl-adenylate (AcAMP) intermediate. In the second half reaction, it can then transfer the acetyl group from AcAMP to the sulfhydryl group of CoA, forming the product AcCoA. The protein is Acetyl-coenzyme A synthetase of Helicobacter acinonychis (strain Sheeba).